The sequence spans 295 residues: Keratin-like protein KRT222 (295 aa).

In terms of domain architecture, IF rod spans 1 to 150 (MELSQLLNEI…HLLEKEEIRY (150 aa)). Residues 2 to 150 (ELSQLLNEIR…HLLEKEEIRY (149 aa)) adopt a coiled-coil conformation.

The protein belongs to the intermediate filament family.

The sequence is that of Keratin-like protein KRT222 (KRT222) from Homo sapiens (Human).